A 295-amino-acid chain; its full sequence is Small ribosomal subunit protein uS2 (295 aa).

The disordered stretch occupies residues 242–295 (APVEPTLARELAPEAPAPEAPAEEAPAAEAAPAAEAAPAAEAAPAEASSEEQAG). Residues 264 to 288 (EEAPAAEAAPAAEAAPAAEAAPAEA) show a composition bias toward low complexity.

It belongs to the universal ribosomal protein uS2 family.

The sequence is that of Small ribosomal subunit protein uS2 from Phenylobacterium zucineum (strain HLK1).